Here is a 587-residue protein sequence, read N- to C-terminus: Pyruvate decarboxylase 3 (587 aa).

Substrate contacts are provided by Asp48 and His135. The thiamine pyrophosphate binding stretch occupies residues 415–496; sequence DSWFNCQKLR…FLINNGGYTI (82 aa). Mg(2+)-binding residues include Asp464, Asn491, and Gly493. Position 497 (Glu497) interacts with substrate.

It belongs to the TPP enzyme family. In terms of assembly, homotetramer. It depends on a metal cation as a cofactor. Requires thiamine diphosphate as cofactor.

The catalysed reaction is a 2-oxocarboxylate + H(+) = an aldehyde + CO2. This is Pyruvate decarboxylase 3 (PDC3) from Oryza sativa subsp. indica (Rice).